We begin with the raw amino-acid sequence, 457 residues long: uncharacterized protein (457 aa).

In terms of domain architecture, TRAM spans 5-63; sequence PVKKNDVIEVEIIDLTHEGLGVAKVDHYPLFIENALPGEKLEIKVLKTGKSFGYGKVLT. Positions 287, 316, 337, and 385 each coordinate S-adenosyl-L-methionine. Catalysis depends on cysteine 412, which acts as the Nucleophile.

Belongs to the class I-like SAM-binding methyltransferase superfamily. RNA M5U methyltransferase family.

This is an uncharacterized protein from Enterococcus faecalis (strain ATCC 700802 / V583).